The chain runs to 283 residues: MEMO1 family protein DKAM_1357 (283 aa).

This sequence belongs to the MEMO1 family.

The polypeptide is MEMO1 family protein DKAM_1357 (Desulfurococcus amylolyticus (strain DSM 18924 / JCM 16383 / VKM B-2413 / 1221n) (Desulfurococcus kamchatkensis)).